Reading from the N-terminus, the 101-residue chain is Small ribosomal subunit protein bS18c (101 aa).

Residues 1–19 are compositionally biased toward basic residues; sequence MDKSKRPFRKSKRSFRRRL. The tract at residues 1–23 is disordered; sequence MDKSKRPFRKSKRSFRRRLPPIG.

The protein belongs to the bacterial ribosomal protein bS18 family. Part of the 30S ribosomal subunit.

The protein localises to the plastid. The protein resides in the chloroplast. The polypeptide is Small ribosomal subunit protein bS18c (Ceratophyllum demersum (Rigid hornwort)).